A 1235-amino-acid chain; its full sequence is MFGDLFEEEYSTVSNNQYGKGKKLKTKALEPPAPREFTNLSGIRNQGGTCYLNSLLQTLHFTPEFREALFSLGPEELGLFEDKDKPDAKVRIIPLQLQRLFAQLLLLDQEAASTADLTDSFGWTSNEEMRQHDVQELNRILFSALETSLVGTSGHDLIYRLYHGTIVNQIVCKECKNVSERQEDFLDLTVAVKNVSGLEDALWNMYVEEEVFDCDNLYHCGTCDRLVKAAKSAKLRKLPPFLTVSLLRFNFDFVKCERYKETSCYTFPLRINLKPFCEQSELDDLEYIYDLFSVIIHKGGCYGGHYHVYIKDVDHLGNWQFQEEKSKPDVNLKDLQSEEEIDHPLMILKAILLEENNLIPVDQLGQKLLKKIGISWNKKYRKQHGPLRKFLQLHSQIFLLSSDESTVRLLKNSSLQAESDFQRNDQQIFKMLPPESPGLNNSISCPHWFDINDSKVQPIREKDIEQQFQGKESAYMLFYRKSQLQRPPEARANPRYGVPCHLLNEMDAANIELQTKRAECDSANNTFELHLHLGPQYHFFNGALHPVVSQTESVWDLTFDKRKTLGDLRQSIFQLLEFWEGDMVLSVAKLVPAGLHIYQSLGGDELTLCETEIADGEDIFVWNGVEVGGVHIQTGIDCEPLLLNVLHLDTSSDGEKCCQVIESPHVFPANAEVGTVLTALAIPAGVIFINSAGCPGGEGWTAIPKEDMRKTFREQGLRNGSSILIQDSHDDNSLLTKEEKWVTSMNEIDWLHVKNLCQLESEEKQVKISATVNTMVFDIRIKAIKELKLMKELADNSCLRPIDRNGKLLCPVPDSYTLKEAELKMGSSLGLCLGKAPSSSQLFLFFAMGSDVQPGTEMEIVVEETISVRDCLKLMLKKSGLQGDAWHLRKMDWCYEAGEPLCEEDATLKELLICSGDTLLLIEGQLPPLGFLKVPIWWYQLQGPSGHWESHQDQTNCTSSWGRVWRATSSQGASGNEPAQVSLLYLGDIEISEDATLAELKSQAMTLPPFLEFGVPSPAHLRAWTVERKRPGRLLRTDRQPLREYKLGRRIEICLEPLQKGENLGPQDVLLRTQVRIPGERTYAPALDLVWNAAQGGTAGSLRQRVADFYRLPVEKIEIAKYFPEKFEWLPISSWNQQITKRKKKKKQDYLQGAPYYLKDGDTIGVKNLLIDDDDDFSTIRDDTGKEKQKQRALGRRKSQEALHEQSSYILSSAETPARPRAPETSLSIHVGSFR.

Residues 41–482 (SGIRNQGGTC…SAYMLFYRKS (442 aa)) form the USP domain. Residue Cys50 is the Nucleophile of the active site. His305 functions as the Proton acceptor in the catalytic mechanism. Residues 1180–1190 (IRDDTGKEKQK) show a composition bias toward basic and acidic residues. The interval 1180–1235 (IRDDTGKEKQKQRALGRRKSQEALHEQSSYILSSAETPARPRAPETSLSIHVGSFR) is disordered. Residues 1205–1215 (EQSSYILSSAE) show a composition bias toward polar residues.

The protein belongs to the peptidase C19 family. As to expression, broadly expressed.

It carries out the reaction Thiol-dependent hydrolysis of ester, thioester, amide, peptide and isopeptide bonds formed by the C-terminal Gly of ubiquitin (a 76-residue protein attached to proteins as an intracellular targeting signal).. Functionally, may be catalytically inactive. The sequence is that of Ubiquitin carboxyl-terminal hydrolase 40 (USP40) from Homo sapiens (Human).